A 362-amino-acid polypeptide reads, in one-letter code: Patr class I histocompatibility antigen, A-5 alpha chain (362 aa).

Positions Met-1–Ala-24 are cleaved as a signal peptide. An alpha-1 region spans residues Gly-25–Ala-114. The Extracellular portion of the chain corresponds to Gly-25 to Ile-308. N-linked (GlcNAc...) asparagine glycosylation is present at Asn-110. An alpha-2 region spans residues Gly-115 to Ala-206. Intrachain disulfides connect Cys-125/Cys-188 and Cys-227/Cys-283. Positions Asp-207–Trp-298 are alpha-3. The Ig-like C1-type domain occupies Pro-209–Thr-295. A connecting peptide region spans residues Glu-299–Ile-308. Residues Val-309 to Cys-332 form a helical membrane-spanning segment. Residues Arg-333–Ala-362 lie on the Cytoplasmic side of the membrane. A disordered region spans residues Ser-336–Ala-362. Ser-343 bears the Phosphoserine mark. Low complexity predominate over residues Ser-343 to Ala-362. Tyr-344 carries the post-translational modification Phosphotyrosine. Phosphoserine is present on residues Ser-345, Ser-349, Ser-350, Ser-352, Ser-356, and Ser-359.

Belongs to the MHC class I family. In terms of assembly, heterodimer of an alpha chain and a beta chain (beta-2-microglobulin).

The protein localises to the membrane. Its function is as follows. Involved in the presentation of foreign antigens to the immune system. In Pan troglodytes (Chimpanzee), this protein is Patr class I histocompatibility antigen, A-5 alpha chain.